Consider the following 368-residue polypeptide: MSIMNSDSVENTHNFAPLKNDRLLKALRFEPIDTTPVWMMRQAGRYLPEYKATRAEAGDFMSLCKDTARATEVTMQPLRRYELDAAILFSDILTIPDAMGLGLYFETGEGPKFKRTLRTEADFNQLEAFNAADSLSYVMDAVTSIRKELNGKVPLFGFSGSAWTLATYMIEGGSSKDYRYTKGLLYSKPEFLHQILDHITTAIIDYLDAQIVAGAQIVQLFDSWGGALAHRQFAEFSHKYNKRVVAELKQRHPEVPVVVFTKGGGLWLDVQMDSEADCLGLDWSMPLDKARAILATGKRKIAVQGNLDPATLYGSPELIRQSVNAMLDDAYAGGEKTGYIANLGHGITQWVDPKNAGVFVDAVHEYKL.

Substrate-binding positions include 41–45, Asp-91, Tyr-168, Ser-223, and His-345; that span reads RQAGR.

Belongs to the uroporphyrinogen decarboxylase family. As to quaternary structure, homodimer.

It is found in the cytoplasm. It carries out the reaction uroporphyrinogen III + 4 H(+) = coproporphyrinogen III + 4 CO2. Its pathway is porphyrin-containing compound metabolism; protoporphyrin-IX biosynthesis; coproporphyrinogen-III from 5-aminolevulinate: step 4/4. Its function is as follows. Catalyzes the decarboxylation of four acetate groups of uroporphyrinogen-III to yield coproporphyrinogen-III. This Psychrobacter sp. (strain PRwf-1) protein is Uroporphyrinogen decarboxylase.